Here is a 366-residue protein sequence, read N- to C-terminus: tRNA (guanine(26)-N(2))-dimethyltransferase (366 aa).

The disordered stretch occupies residues M1 to F28. Positions M1–V365 constitute a Trm1 methyltransferase domain. Positions 37, 64, and 79 each coordinate S-adenosyl-L-methionine. Residues C234, C237, C254, and C257 each contribute to the Zn(2+) site.

The protein belongs to the class I-like SAM-binding methyltransferase superfamily. Trm1 family.

It catalyses the reaction guanosine(26) in tRNA + 2 S-adenosyl-L-methionine = N(2)-dimethylguanosine(26) in tRNA + 2 S-adenosyl-L-homocysteine + 2 H(+). In terms of biological role, dimethylates a single guanine residue at position 26 of a number of tRNAs using S-adenosyl-L-methionine as donor of the methyl groups. In Natronomonas pharaonis (strain ATCC 35678 / DSM 2160 / CIP 103997 / JCM 8858 / NBRC 14720 / NCIMB 2260 / Gabara) (Halobacterium pharaonis), this protein is tRNA (guanine(26)-N(2))-dimethyltransferase.